A 116-amino-acid chain; its full sequence is uncharacterized protein (116 aa).

The first 21 residues, Met-1–Ala-21, serve as a signal peptide directing secretion.

This is an uncharacterized protein from Saccharomyces cerevisiae (strain ATCC 204508 / S288c) (Baker's yeast).